Reading from the N-terminus, the 130-residue chain is Small ribosomal subunit protein uS11c (130 aa).

This sequence belongs to the universal ribosomal protein uS11 family. In terms of assembly, part of the 30S ribosomal subunit.

The protein resides in the plastid. The protein localises to the chloroplast. This is Small ribosomal subunit protein uS11c from Angiopteris evecta (Mule's foot fern).